Consider the following 174-residue polypeptide: Small ribosomal subunit protein bS16 (174 aa).

The interval 81–174 (QRFTGEPAPP…DATTDATPSA (94 aa)) is disordered. The span at 87-97 (PAPPPMKTAPP) shows a compositional bias: pro residues. Positions 98–118 (KPDKKALFEAAAKEAAGEPRA) are enriched in basic and acidic residues. Low complexity predominate over residues 135-158 (ETTPAAEAAPDAAASADEPAGGAS). Positions 160-174 (AAESQDATTDATPSA) are enriched in polar residues.

The protein belongs to the bacterial ribosomal protein bS16 family.

In Acidothermus cellulolyticus (strain ATCC 43068 / DSM 8971 / 11B), this protein is Small ribosomal subunit protein bS16.